The chain runs to 243 residues: Mesoderm posterior protein 1 (243 aa).

Positions 1–86 (MAQPLCEPRS…QRQSASEREK (86 aa)) are disordered. Residues 27 to 36 (DGNSVCSPAW) show a composition bias toward polar residues. Residues 76 to 130 (GQRQSASEREKLRMRTLARALHELRRFLPPSVAPTGQNLTKIETLRLAIRYIGHL) enclose the bHLH domain. The CPLCP motif lies at 153 to 157 (CPLCP). Residues 204–228 (AETASQERQEMEPSPSSPLFSSDML) form a disordered region.

As to expression, no expression was detected in adult tissues except the testis. Expression in the testis was regulated developmentally; expressed 2 weeks after birth, and increases, reaching the full expression level in mature testes.

It is found in the nucleus. Transcription factor. Plays a role in the epithelialization of somitic mesoderm and in the development of cardiac mesoderm. Defines the rostrocaudal patterning of the somites by participating in distinct Notch pathways. This is Mesoderm posterior protein 1 (Mesp1) from Mus musculus (Mouse).